Reading from the N-terminus, the 343-residue chain is Ricin B-like lectin R40G2 (343 aa).

The Ricin B-type lectin domain occupies 194 to 340; the sequence is TVRVFSAAGE…CEGDNQRWKI (147 aa).

Its function is as follows. Lectin which binds carbohydrates in vitro. Interacts through its lectin domain with glycan structures containing specific motifs. The polypeptide is Ricin B-like lectin R40G2 (Oryza sativa subsp. japonica (Rice)).